The following is a 223-amino-acid chain: Putative N-acetylmannosamine-6-phosphate 2-epimerase (223 aa).

It belongs to the NanE family.

It catalyses the reaction an N-acyl-D-glucosamine 6-phosphate = an N-acyl-D-mannosamine 6-phosphate. It participates in amino-sugar metabolism; N-acetylneuraminate degradation; D-fructose 6-phosphate from N-acetylneuraminate: step 3/5. Its function is as follows. Converts N-acetylmannosamine-6-phosphate (ManNAc-6-P) to N-acetylglucosamine-6-phosphate (GlcNAc-6-P). This chain is Putative N-acetylmannosamine-6-phosphate 2-epimerase, found in Clostridioides difficile (strain 630) (Peptoclostridium difficile).